Reading from the N-terminus, the 264-residue chain is ATP synthase subunit a (264 aa).

The next 6 helical transmembrane spans lie at 32-52, 89-109, 134-154, 177-197, 208-228, and 235-255; these read IDSL…FHSV, VIAP…FMDM, DLNI…YYSI, IPVN…SLAL, LIFI…TLGV, and LIFH…LTIV.

This sequence belongs to the ATPase A chain family. F-type ATPases have 2 components, CF(1) - the catalytic core - and CF(0) - the membrane proton channel. CF(1) has five subunits: alpha(3), beta(3), gamma(1), delta(1), epsilon(1). CF(0) has three main subunits: a(1), b(2) and c(9-12). The alpha and beta chains form an alternating ring which encloses part of the gamma chain. CF(1) is attached to CF(0) by a central stalk formed by the gamma and epsilon chains, while a peripheral stalk is formed by the delta and b chains.

It localises to the cell inner membrane. Its function is as follows. Key component of the proton channel; it plays a direct role in the translocation of protons across the membrane. This chain is ATP synthase subunit a, found in Shewanella piezotolerans (strain WP3 / JCM 13877).